Here is a 61-residue protein sequence, read N- to C-terminus: MSESETTDEPDSETASSERTGQLESCQRCGREQGLVGKYDIWLCRQCFREISRGMGFRKYS.

A compositionally biased stretch (acidic residues) spans 1 to 12 (MSESETTDEPDS). A disordered region spans residues 1-25 (MSESETTDEPDSETASSERTGQLES). Positions 26, 29, 44, and 47 each coordinate Zn(2+).

The protein belongs to the universal ribosomal protein uS14 family. Zinc-binding uS14 subfamily. Part of the 30S ribosomal subunit. Zn(2+) is required as a cofactor.

Its function is as follows. Binds 16S rRNA, required for the assembly of 30S particles. The protein is Small ribosomal subunit protein uS14 of Haloarcula marismortui (strain ATCC 43049 / DSM 3752 / JCM 8966 / VKM B-1809) (Halobacterium marismortui).